The following is a 1203-amino-acid chain: Potassium/sodium hyperpolarization-activated cyclic nucleotide-gated channel 4 (1203 aa).

The disordered stretch occupies residues 1–182 (MDKLPPSMRK…QPASASCEQP (182 aa)). Residues 1-263 (MDKLPPSMRK…IIHPYSDFRF (263 aa)) are Cytoplasmic-facing. Positions 26 to 36 (MDEEEDAEEEG) are enriched in acidic residues. A compositionally biased stretch (gly residues) spans 105-117 (SRGGGSGGTGSGS). Basic and acidic residues predominate over residues 121–133 (HLHDSAEERRLIA). Serine 138 bears the Phosphoserine mark. The span at 163–174 (ASPPPPQQPPQP) shows a compositional bias: pro residues. Positions 209 to 260 (GQAGFMQRQFGAMLQPGVNKFSLRMFGSQKAVEREQERVKSAGFWIIHPYSD) are involved in subunit assembly. A helical transmembrane segment spans residues 264 to 286 (YWDLTMLLLMVGNLIIIPVGITF). Residues 287–293 (FKDENTT) are Extracellular-facing. Residues 294 to 314 (PWIVFNVVSDTFFLIDLVLNF) form a helical membrane-spanning segment. Topologically, residues 315–336 (RTGIVVEDNTEIILDPQRIKMK) are cytoplasmic. The chain crosses the membrane as a helical span at residues 337 to 359 (YLKSWFMVDFISSIPVDYIFLIV). Topologically, residues 360–378 (ETRIDSEVYKTARALRIVR) are extracellular. Residues 379–399 (FTKILSLLRLLRLSRLIRYIH) traverse the membrane as a helical; Voltage-sensor segment. The Cytoplasmic portion of the chain corresponds to 400–413 (QWEEIFHMTYDLAS). A helical membrane pass occupies residues 414 to 436 (AVVRIVNLIGMMLLLCHWDGCLQ). Over 437–464 (FLVPMLQDFPDDCWVSINNMVNNSWGKQ) the chain is Extracellular. Asparagine 458 carries an N-linked (GlcNAc...) asparagine glycan. The pore-forming intramembrane region spans 465–486 (YSYALFKAMSHMLCIGYGRQAP). The Extracellular portion of the chain corresponds to 487 to 491 (VGMSD). Residues 492-517 (VWLTMLSMIVGATCYAMFIGHATALI) traverse the membrane as a helical segment. Topologically, residues 518–1203 (QSLDSSRRQY…PVRSKLPSNL (686 aa)) are cytoplasmic. Positions 559, 562, 564, and 566 each coordinate 3',5'-cyclic GMP. 7 residues coordinate 3',5'-cyclic AMP: glycine 659, glutamate 660, cysteine 662, arginine 669, threonine 670, valine 673, and arginine 710. Disordered stretches follow at residues 836–856 (ALGS…SSSS), 870–897 (GLSP…TPSA), and 918–1203 (LSSS…PSNL). Composition is skewed to low complexity over residues 918–941 (LSSS…AAQP) and 966–986 (RSPS…SLGL). Residues 995 to 1004 (ETPPRQPEPP) are compositionally biased toward pro residues. Residues 1005-1028 (SLVAGASGGASPVGFTPRGGLSPP) are compositionally biased toward low complexity. Positions 1029–1042 (GHSPGPPRTFPSAP) are enriched in pro residues. A compositionally biased stretch (low complexity) spans 1045 to 1056 (ASGSHGSLLLPP). A phosphoserine mark is found at serine 1105 and serine 1108. Positions 1122 to 1137 (AGGGSGGSGSSGGLGP) are enriched in gly residues.

Belongs to the potassium channel HCN family. As to quaternary structure, homotetramer. The channel assemble into homotetramers or heteromeric complexes that contains of four pore-forming subunits. Interacts with PEX5L with a 4:4 HCN4:PEX5L stoichiometry; reduces the effects of cAMP on the voltage-dependence and rate of activation. Interacts with IRAG1; regulates HCN4 channel activity. Interacts with IRAG2; regulates HCN4 channel activity. S-palmitoylated. In terms of tissue distribution, highly expressed in thalamus, testis and in heart, both in ventricle and atrium. Detected at much lower levels in amygdala, substantia nigra, cerebellum and hippocampus.

The protein localises to the cell membrane. It catalyses the reaction K(+)(in) = K(+)(out). The enzyme catalyses Na(+)(in) = Na(+)(out). Its activity is regulated as follows. Activated by cAMP and to a lesser extent by cGMP and cCMP. cAMP binding causes a conformation change that leads to the assembly of an active tetramer and channel opening. Binding of cAMP removes a tonic inhibition conferred by cyclic nucleotide-binding domain (CNBD) on channel opening. Cyclic dinucleotides can modulate HCN4 channel; cyclic dinucleotides acting as potent antagonists of cAMP. Inhibited by extracellular Cs(+) ions. Auxiliary subunits can also regulate HCN4 channel. IRAG1 causes a gain-of-function by shifting HCN4 activation to more depolarized membrane potentials in the absence of cAMP. In contrast, IRAG2 causes a loss-of-function by inhibiting cAMP-dependent potentiation of HCN4 activation. Functionally, hyperpolarization-activated ion channel that are permeable to Na(+) and K(+) ions with very slow activation and inactivation. Exhibits higher selectivity for K(+) over Na(+) ions. Contributes to the native pacemaker currents in heart (If) that regulate the rhythm of heart beat. Contributes to the native pacemaker currents in neurons (Ih). May mediate responses to sour stimuli. This chain is Potassium/sodium hyperpolarization-activated cyclic nucleotide-gated channel 4, found in Homo sapiens (Human).